We begin with the raw amino-acid sequence, 555 residues long: Putative polyketide hydroxylase (555 aa).

FAD is bound by residues 16-45 (PVLV…LVER) and 303-313 (YRAGRVFLAGD). Residues 366-395 (ATTARAAARSAEHSHPGFAPPPGTSGGPQG) form a disordered region.

This sequence belongs to the PheA/TfdB FAD monooxygenase family. The cofactor is FAD.

Functionally, involved in developmentally regulated synthesis of a compound biosynthetically related to polyketide antibiotics which is essential for spore color in Streptomyces halstedii. The sequence is that of Putative polyketide hydroxylase (schC) from Streptomyces halstedii.